Consider the following 173-residue polypeptide: uncharacterized protein (173 aa).

A compositionally biased stretch (basic and acidic residues) spans 1-11; it reads MLCAKNKKDPK. The interval 1 to 173 is disordered; it reads MLCAKNKKDP…EKMEKSEKAY (173 aa). Residues 17–41 show a composition bias toward polar residues; sequence FSETSKVQNVQNTQPKPAAPSQMSI. Composition is skewed to basic and acidic residues over residues 56 to 109 and 120 to 144; these read KSVE…KADN and AKKE…EAKK. Residues 145–156 are compositionally biased toward basic residues; the sequence is KESRRQKKMRNK. The segment covering 157-173 has biased composition (basic and acidic residues); that stretch reads NSKEGSVEKMEKSEKAY.

This is an uncharacterized protein from Caenorhabditis elegans.